A 1097-amino-acid chain; its full sequence is Platelet-derived growth factor receptor beta (1097 aa).

An N-terminal signal peptide occupies residues 1–31 (MGLPEVMPASVLRGQLLLFVLLLLGPQISQG). Ig-like C2-type domains follow at residues 32–119 (LVIT…YIFV), 128–209 (PMDS…YSLQ), and 213–308 (INVS…INVT). Residues 32-531 (LVITPPGPEF…VVPHSLPFKV (500 aa)) are Extracellular-facing. N-linked (GlcNAc...) asparagine glycans are attached at residues asparagine 44, asparagine 88, and asparagine 102. A disulfide bridge connects residues cysteine 53 and cysteine 99. A disulfide bridge connects residues cysteine 148 and cysteine 189. An N-linked (GlcNAc...) asparagine glycan is attached at asparagine 214. A disulfide bridge connects residues cysteine 234 and cysteine 290. Residues asparagine 291, asparagine 306, asparagine 353, asparagine 370, asparagine 444, asparagine 467, and asparagine 478 are each glycosylated (N-linked (GlcNAc...) asparagine). Residues 415-523 (PVRVLELSES…GRDSQEVTVV (109 aa)) form the Ig-like C2-type 4 domain. Cysteines 435 and 507 form a disulfide. The helical transmembrane segment at 532-552 (VVISAILALVVLTVISLIILI) threads the bilayer. At 553 to 1097 (MLWQRKPRYE…PLAEAEDSFL (545 aa)) the chain is on the cytoplasmic side. 3 positions are modified to phosphotyrosine; by autocatalysis: tyrosine 561, tyrosine 578, and tyrosine 580. The Protein kinase domain occupies 599-961 (LVLGRTLGSG…QLVLLLERLL (363 aa)). ATP is bound by residues 605–613 (LGSGAFGQV) and lysine 633. At tyrosine 685 the chain carries Phosphotyrosine; by ABL1 and ABL2. Tyrosine 715, tyrosine 739, tyrosine 750, tyrosine 762, tyrosine 770, tyrosine 774, and tyrosine 777 each carry phosphotyrosine; by autocatalysis. Aspartate 825 acts as the Proton acceptor in catalysis. The residue at position 856 (tyrosine 856) is a Phosphotyrosine; by autocatalysis. Residues tyrosine 933 and tyrosine 969 each carry the phosphotyrosine; by ABL1 and ABL2 modification. Phosphotyrosine; by autocatalysis occurs at positions 1008 and 1020. The tract at residues 1016–1097 (TDNDYIIPLP…PLAEAEDSFL (82 aa)) is disordered. The span at 1042 to 1059 (SLASSTLNEVNTSSTISC) shows a compositional bias: polar residues. A compositionally biased stretch (low complexity) spans 1072–1081 (EPEAQLEQPQ).

Belongs to the protein kinase superfamily. Tyr protein kinase family. CSF-1/PDGF receptor subfamily. In terms of assembly, interacts with homodimeric PDGFB and PDGFD, and with heterodimers formed by PDGFA and PDGFB. May also interact with homodimeric PDGFC. Monomer in the absence of bound ligand. Interaction with homodimeric PDGFB, heterodimers formed by PDGFA and PDGFB or homodimeric PDGFD, leads to receptor dimerization, where both PDGFRA homodimers and heterodimers with PDGFRB are observed. Interacts with SH2B2/APS. Interacts directly (tyrosine phosphorylated) with SHB. Interacts (tyrosine phosphorylated) with PIK3R1 and RASA1. Interacts (tyrosine phosphorylated) with CBL. Interacts (tyrosine phosphorylated) with SRC and SRC family kinases. Interacts (tyrosine phosphorylated) with PIK3C2B, maybe indirectly. Interacts (tyrosine phosphorylated) with SHC1, GRB7, GRB10 and NCK1. Interaction with GRB2 is mediated by SHC1. Interacts (via C-terminus) with NHERF1. N-glycosylated. In terms of processing, ubiquitinated. After autophosphorylation, the receptor is polyubiquitinated, leading to its degradation. Post-translationally, autophosphorylated on tyrosine residues upon ligand binding. Autophosphorylation occurs in trans, i.e. one subunit of the dimeric receptor phosphorylates tyrosine residues on the other subunit. Phosphorylation at Tyr-578, and to a lesser degree, Tyr-580 is important for interaction with SRC. Phosphorylation at Tyr-715 is important for interaction with GRB2. Phosphorylation at Tyr-739 and Tyr-750 is important for interaction with PIK3R1. Phosphorylation at Tyr-750 is important for interaction with NCK1. Phosphorylation at Tyr-770 and Tyr-856 is important for interaction with RASA1/GAP. Phosphorylation at Tyr-856 is important for efficient phosphorylation of PLCG1 and PTPN11, resulting in increased phosphorylation of AKT1, MAPK1/ERK2 and/or MAPK3/ERK1, PDCD6IP/ALIX and STAM, and in increased cell proliferation. Phosphorylation at Tyr-1008 is important for interaction with PTPN11. Phosphorylation at Tyr-1008 and Tyr-1020 is important for interaction with PLCG1. Dephosphorylated by PTPRJ at Tyr-750, Tyr-856, Tyr-1008 and Tyr-1020. Dephosphorylated by PTPN2 at Tyr-578 and Tyr-1020.

The protein resides in the cell membrane. It is found in the cytoplasmic vesicle. The protein localises to the lysosome lumen. The catalysed reaction is L-tyrosyl-[protein] + ATP = O-phospho-L-tyrosyl-[protein] + ADP + H(+). Its activity is regulated as follows. Present in an inactive conformation in the absence of bound ligand. Binding of PDGFB and/or PDGFD leads to dimerization and activation by autophosphorylation on tyrosine residues. In terms of biological role, tyrosine-protein kinase that acts as a cell-surface receptor for homodimeric PDGFB and PDGFD and for heterodimers formed by PDGFA and PDGFB, and plays an essential role in the regulation of embryonic development, cell proliferation, survival, differentiation, chemotaxis and migration. Plays an essential role in blood vessel development by promoting proliferation, migration and recruitment of pericytes and smooth muscle cells to endothelial cells. Plays a role in the migration of vascular smooth muscle cells and the formation of neointima at vascular injury sites. Required for normal development of the cardiovascular system. Required for normal recruitment of pericytes (mesangial cells) in the kidney glomerulus, and for normal formation of a branched network of capillaries in kidney glomeruli. Promotes rearrangement of the actin cytoskeleton and the formation of membrane ruffles. Binding of its cognate ligands - homodimeric PDGFB, heterodimers formed by PDGFA and PDGFB or homodimeric PDGFD -leads to the activation of several signaling cascades; the response depends on the nature of the bound ligand and is modulated by the formation of heterodimers between PDGFRA and PDGFRB. Phosphorylates PLCG1, PIK3R1, PTPN11, RASA1/GAP, CBL, SHC1 and NCK1. Activation of PLCG1 leads to the production of the cellular signaling molecules diacylglycerol and inositol 1,4,5-trisphosphate, mobilization of cytosolic Ca(2+) and the activation of protein kinase C. Phosphorylation of PIK3R1, the regulatory subunit of phosphatidylinositol 3-kinase, leads to the activation of the AKT1 signaling pathway. Phosphorylation of SHC1, or of the C-terminus of PTPN11, creates a binding site for GRB2, resulting in the activation of HRAS, RAF1 and down-stream MAP kinases, including MAPK1/ERK2 and/or MAPK3/ERK1. Promotes phosphorylation and activation of SRC family kinases. Promotes phosphorylation of PDCD6IP/ALIX and STAM. Receptor signaling is down-regulated by protein phosphatases that dephosphorylate the receptor and its down-stream effectors, and by rapid internalization of the activated receptor. This Rattus norvegicus (Rat) protein is Platelet-derived growth factor receptor beta (Pdgfrb).